Consider the following 314-residue polypeptide: tRNA pseudouridine synthase B (314 aa).

Residue His43 participates in substrate binding. Asp48 functions as the Nucleophile in the catalytic mechanism. 3 residues coordinate substrate: Tyr76, Tyr179, and Leu200.

This sequence belongs to the pseudouridine synthase TruB family. Type 1 subfamily.

It catalyses the reaction uridine(55) in tRNA = pseudouridine(55) in tRNA. In terms of biological role, responsible for synthesis of pseudouridine from uracil-55 in the psi GC loop of transfer RNAs. The protein is tRNA pseudouridine synthase B of Shigella dysenteriae serotype 1 (strain Sd197).